A 216-amino-acid polypeptide reads, in one-letter code: LexA repressor (216 aa).

The segment at residues 28 to 48 is a DNA-binding region (H-T-H motif); it reads RAEIAAEFGFSSPNAAEEHLR. Residues Ser-134 and Lys-171 each act as for autocatalytic cleavage activity in the active site.

This sequence belongs to the peptidase S24 family. Homodimer.

The catalysed reaction is Hydrolysis of Ala-|-Gly bond in repressor LexA.. In terms of biological role, represses a number of genes involved in the response to DNA damage (SOS response), including recA and lexA. In the presence of single-stranded DNA, RecA interacts with LexA causing an autocatalytic cleavage which disrupts the DNA-binding part of LexA, leading to derepression of the SOS regulon and eventually DNA repair. This Ralstonia pickettii (strain 12J) protein is LexA repressor.